The primary structure comprises 551 residues: Probable malate:quinone oxidoreductase (551 aa).

Low complexity predominate over residues 525-544 (QTAAAAPQAQPQLKPQPDAK). The segment at 525–551 (QTAAAAPQAQPQLKPQPDAKPVADIAL) is disordered.

This sequence belongs to the MQO family. FAD serves as cofactor.

The enzyme catalyses (S)-malate + a quinone = a quinol + oxaloacetate. It participates in carbohydrate metabolism; tricarboxylic acid cycle; oxaloacetate from (S)-malate (quinone route): step 1/1. This is Probable malate:quinone oxidoreductase from Enterobacter sp. (strain 638).